A 366-amino-acid chain; its full sequence is Alanine racemase (366 aa).

The active-site Proton acceptor; specific for D-alanine is the Lys40. Lys40 carries the post-translational modification N6-(pyridoxal phosphate)lysine. Residue Arg136 participates in substrate binding. Tyr263 functions as the Proton acceptor; specific for L-alanine in the catalytic mechanism. Substrate is bound at residue Met310.

It belongs to the alanine racemase family. Requires pyridoxal 5'-phosphate as cofactor.

The enzyme catalyses L-alanine = D-alanine. It participates in amino-acid biosynthesis; D-alanine biosynthesis; D-alanine from L-alanine: step 1/1. Catalyzes the interconversion of L-alanine and D-alanine. May also act on other amino acids. This chain is Alanine racemase (alr), found in Streptococcus equi subsp. equi (strain 4047).